We begin with the raw amino-acid sequence, 120 residues long: Small ribosomal subunit protein uS12c (120 aa).

Belongs to the universal ribosomal protein uS12 family. In terms of assembly, part of the 30S ribosomal subunit.

Its subcellular location is the plastid. It is found in the apicoplast. Functionally, with S4 and S5 plays an important role in translational accuracy. Located at the interface of the 30S and 50S subunits. This chain is Small ribosomal subunit protein uS12c (rps12), found in Eimeria tenella (Coccidian parasite).